Reading from the N-terminus, the 159-residue chain is MDFRIGQGYDVHALVPGRPLIIGGVTIPYERGLLGHSDADVLLHAITDALFGAAAMGDIGRHFSDTDAKFAGADSRVLLRECFARVTAAGFSIANVDSSVVAQAPKLAPHIEGMRANIAADLGLPVERVNVKAKTNEKLGYLGRGEGIEAQAAVLLIRN.

Residues aspartate 10 and histidine 12 each contribute to the a divalent metal cation site. 4-CDP-2-C-methyl-D-erythritol 2-phosphate is bound by residues 10–12 and 36–37; these read DVH and HS. Histidine 44 provides a ligand contact to a divalent metal cation. 4-CDP-2-C-methyl-D-erythritol 2-phosphate contacts are provided by residues 58–60, 63–67, and arginine 144; these read DIG and FSDTD.

Belongs to the IspF family. As to quaternary structure, homotrimer. The cofactor is a divalent metal cation.

The enzyme catalyses 4-CDP-2-C-methyl-D-erythritol 2-phosphate = 2-C-methyl-D-erythritol 2,4-cyclic diphosphate + CMP. It functions in the pathway isoprenoid biosynthesis; isopentenyl diphosphate biosynthesis via DXP pathway; isopentenyl diphosphate from 1-deoxy-D-xylulose 5-phosphate: step 4/6. Functionally, involved in the biosynthesis of isopentenyl diphosphate (IPP) and dimethylallyl diphosphate (DMAPP), two major building blocks of isoprenoid compounds. Catalyzes the conversion of 4-diphosphocytidyl-2-C-methyl-D-erythritol 2-phosphate (CDP-ME2P) to 2-C-methyl-D-erythritol 2,4-cyclodiphosphate (ME-CPP) with a corresponding release of cytidine 5-monophosphate (CMP). The sequence is that of 2-C-methyl-D-erythritol 2,4-cyclodiphosphate synthase from Paraburkholderia xenovorans (strain LB400).